A 355-amino-acid chain; its full sequence is Chemerin-like receptor 2 (355 aa).

Residues 1–41 are Extracellular-facing; the sequence is MEDLEETLFEEFENYSYDLDYYSLESDLEEKVQLGVVHWVS. N-linked (GlcNAc...) asparagine glycosylation occurs at Asn-14. Residues 42–62 form a helical membrane-spanning segment; that stretch reads LVLYCLAFVLGIPGNAIVIWF. The Cytoplasmic segment spans residues 63-73; it reads TGFKWKKTVTT. The helical transmembrane segment at 74–94 threads the bilayer; that stretch reads LWFLNLAIADFIFLLFLPLYI. At 95 to 112 the chain is on the extracellular side; that stretch reads SYVAMNFHWPFGIWLCKA. A disulfide bridge links Cys-110 with Cys-187. A helical transmembrane segment spans residues 113–133; sequence NSFTAQLNMFASVFFLTVISL. Topologically, residues 134 to 154 are cytoplasmic; the sequence is DHYIHLIHPVLSHRHRTLKNS. A helical membrane pass occupies residues 155–175; the sequence is LIVIIFIWLLASLIGGPALYF. Topologically, residues 176 to 210 are extracellular; it reads RDTVEFNNHTLCYNNFQKHDPDLTLIRHHVLTWVK. Residues 211–231 traverse the membrane as a helical segment; that stretch reads FIIGYLFPLLTMSICYLCLIF. At 232–247 the chain is on the cytoplasmic side; sequence KVKKRSILISSRHFWT. A helical membrane pass occupies residues 248 to 268; it reads ILVVVVAFVVCWTPYHLFSIW. Residues 269 to 286 are Extracellular-facing; the sequence is ELTIHHNSYSHHVMQAGI. The chain crosses the membrane as a helical span at residues 287 to 307; that stretch reads PLSTGLAFLNSCLNPILYVLI. The Cytoplasmic portion of the chain corresponds to 308 to 355; it reads SKKFQARFRSSVAEILKYTLWEVSCSGTVSEQLRNSETKNLCLLETAQ.

Belongs to the chemokine-like receptor (CMKLR) family. As to expression, expressed in hippocampus.

It is found in the cell membrane. Functionally, receptor for chemoattractant adipokine chemerin/RARRES2 suggesting a role for this receptor in the regulation of inflammation and energy homesotasis. Signals mainly via beta-arrestin pathway. Binding of RARRES2 activates weakly G proteins, calcium mobilization and MAPK1/MAPK3 (ERK1/2) phosphorylation too. Also acts as a receptor for TAFA1, mediates its effects on neuronal stem-cell proliferation and differentiation via the activation of ROCK/ERK and ROCK/STAT3 signaling pathway. (Microbial infection) Coreceptor for HIV-1. This chain is Chemerin-like receptor 2, found in Homo sapiens (Human).